We begin with the raw amino-acid sequence, 206 residues long: Anti-sigma-W factor RsiW (206 aa).

The Cytoplasmic segment spans residues 1–87 (MSCPEHIVQL…ASINRWLKAH (87 aa)). Zn(2+) is bound by residues histidine 30, cysteine 34, and cysteine 37. A helical membrane pass occupies residues 88-108 (PFLVAAALFAILMGGSFFSSW). Residues 109–206 (KNDHDFSVSS…SVFGVKESKE (98 aa)) lie on the Extracellular side of the membrane.

This sequence belongs to the zinc-associated anti-sigma factor (ZAS) superfamily. Anti-sigma-W factor family. It depends on Zn(2+) as a cofactor. In terms of processing, is processed by three successive proteolytic events. First, the extracellular region of RsiW is cleaved by PrsW (Site-1 cleavage) in response to cell envelope stresses. Next, it undergoes cleavage at an intramembrane site (Site-2 cleavage) mediated by RasP. This cleavage uncovers a cryptic proteolytic tag with conserved alanine residues in the transmembrane segment, that is recognized mainly by the ClpXP protease, which completely degrades the protein in the cytoplasm and leads to the induction of the sigma-W-controlled genes.

The protein resides in the membrane. In terms of biological role, is the anti-sigma factor for SigW. The presence of RsiW leads to the inactivation of SigW, and its proteolytic destruction to sigma-W activation. The polypeptide is Anti-sigma-W factor RsiW (rsiW) (Bacillus licheniformis (strain ATCC 14580 / DSM 13 / JCM 2505 / CCUG 7422 / NBRC 12200 / NCIMB 9375 / NCTC 10341 / NRRL NRS-1264 / Gibson 46)).